Reading from the N-terminus, the 220-residue chain is Cytidylate kinase (220 aa).

Gly-10–Thr-18 is an ATP binding site.

The protein belongs to the cytidylate kinase family. Type 1 subfamily.

The protein resides in the cytoplasm. It carries out the reaction CMP + ATP = CDP + ADP. The catalysed reaction is dCMP + ATP = dCDP + ADP. This chain is Cytidylate kinase, found in Lactococcus lactis subsp. cremoris (strain SK11).